We begin with the raw amino-acid sequence, 161 residues long: RNA pyrophosphohydrolase (161 aa).

Residues proline 9–aspartate 155 form the Nudix hydrolase domain. The Nudix box signature appears at glycine 44 to glycine 65.

Belongs to the Nudix hydrolase family. RppH subfamily. The cofactor is a divalent metal cation.

Its function is as follows. Accelerates the degradation of transcripts by removing pyrophosphate from the 5'-end of triphosphorylated RNA, leading to a more labile monophosphorylated state that can stimulate subsequent ribonuclease cleavage. The sequence is that of RNA pyrophosphohydrolase from Novosphingobium aromaticivorans (strain ATCC 700278 / DSM 12444 / CCUG 56034 / CIP 105152 / NBRC 16084 / F199).